Reading from the N-terminus, the 366-residue chain is Probable cinnamyl alcohol dehydrogenase 3 (366 aa).

Zn(2+) is bound at residue Cys-53. Ser-55 serves as a coordination point for NADP(+). Residues His-75, Glu-76, Cys-106, Cys-109, Cys-112, Cys-120, and Cys-169 each contribute to the Zn(2+) site. Residues Thr-173, 194-199 (GLGGLG), 217-222 (SSSPGK), Thr-257, Gly-281, and 304-306 (SNI) contribute to the NADP(+) site.

It belongs to the zinc-containing alcohol dehydrogenase family. In terms of assembly, homodimer. Zn(2+) is required as a cofactor.

It catalyses the reaction (E)-cinnamyl alcohol + NADP(+) = (E)-cinnamaldehyde + NADPH + H(+). The enzyme catalyses (E)-coniferol + NADP(+) = (E)-coniferaldehyde + NADPH + H(+). The catalysed reaction is (E)-sinapyl alcohol + NADP(+) = (E)-sinapaldehyde + NADPH + H(+). It carries out the reaction (E)-4-coumaroyl alcohol + NADP(+) = (E)-4-coumaraldehyde + NADPH + H(+). It catalyses the reaction (E)-caffeyl alcohol + NADP(+) = (E)-caffeyl aldehyde + NADPH + H(+). The protein operates within aromatic compound metabolism; phenylpropanoid biosynthesis. Its function is as follows. Involved in lignin biosynthesis. Catalyzes the final step specific for the production of lignin monomers. Catalyzes the NADPH-dependent reduction of coniferaldehyde, 5-hydroxyconiferaldehyde, sinapaldehyde, 4-coumaraldehyde and caffeyl aldehyde to their respective alcohols. This is Probable cinnamyl alcohol dehydrogenase 3 from Oryza sativa subsp. japonica (Rice).